The primary structure comprises 310 residues: Acetylglutamate kinase (310 aa).

Substrate-binding positions include 76–77, Arg-98, and Asn-203; that span reads GG.

It belongs to the acetylglutamate kinase family. ArgB subfamily.

The protein resides in the cytoplasm. The catalysed reaction is N-acetyl-L-glutamate + ATP = N-acetyl-L-glutamyl 5-phosphate + ADP. The protein operates within amino-acid biosynthesis; L-arginine biosynthesis; N(2)-acetyl-L-ornithine from L-glutamate: step 2/4. Catalyzes the ATP-dependent phosphorylation of N-acetyl-L-glutamate. This Cutibacterium acnes (strain DSM 16379 / KPA171202) (Propionibacterium acnes) protein is Acetylglutamate kinase.